Here is a 473-residue protein sequence, read N- to C-terminus: 3-isopropylmalate dehydratase large subunit (473 aa).

The tract at residues 289–319 is disordered; that stretch reads TVTWGTTPGQTAGITEPIPDPDDLPEEDRDT. Residues 291–301 show a composition bias toward polar residues; sequence TWGTTPGQTAG. The segment covering 307 to 317 has biased composition (acidic residues); that stretch reads PDPDDLPEEDR. 3 residues coordinate [4Fe-4S] cluster: C348, C408, and C411.

The protein belongs to the aconitase/IPM isomerase family. LeuC type 1 subfamily. As to quaternary structure, heterodimer of LeuC and LeuD. Requires [4Fe-4S] cluster as cofactor.

The catalysed reaction is (2R,3S)-3-isopropylmalate = (2S)-2-isopropylmalate. Its pathway is amino-acid biosynthesis; L-leucine biosynthesis; L-leucine from 3-methyl-2-oxobutanoate: step 2/4. Catalyzes the isomerization between 2-isopropylmalate and 3-isopropylmalate, via the formation of 2-isopropylmaleate. The chain is 3-isopropylmalate dehydratase large subunit from Halorubrum lacusprofundi (strain ATCC 49239 / DSM 5036 / JCM 8891 / ACAM 34).